The sequence spans 331 residues: Adenosine deaminase (331 aa).

The Zn(2+) site is built by histidine 12 and histidine 14. Residues histidine 14, aspartate 16, and glycine 170 each contribute to the substrate site. Histidine 197 serves as a coordination point for Zn(2+). The active-site Proton donor is the glutamate 200. Aspartate 278 is a Zn(2+) binding site. Substrate is bound at residue aspartate 279.

It belongs to the metallo-dependent hydrolases superfamily. Adenosine and AMP deaminases family. Adenosine deaminase subfamily. Requires Zn(2+) as cofactor.

It carries out the reaction adenosine + H2O + H(+) = inosine + NH4(+). The enzyme catalyses 2'-deoxyadenosine + H2O + H(+) = 2'-deoxyinosine + NH4(+). In terms of biological role, catalyzes the hydrolytic deamination of adenosine and 2-deoxyadenosine. The protein is Adenosine deaminase of Shewanella sp. (strain MR-4).